We begin with the raw amino-acid sequence, 173 residues long: MAIILGIDPGSRVTGYGVIRQVGRQLSYLGSGCIRTKVDDLPSRLKLIYAGVTEIITQFQPDYFAIEQVFMAKNADSALKLGQARGVAIVAATNQSLPVFEYAARQVKQTVVGIGSAEKSQVQHMVRTLLKLPANPQADAADALAIAITHCHISQNVAQVSETRLNLARGRLR.

Active-site residues include Asp-8, Glu-67, and Asp-139. The Mg(2+) site is built by Asp-8, Glu-67, and Asp-139.

It belongs to the RuvC family. As to quaternary structure, homodimer which binds Holliday junction (HJ) DNA. The HJ becomes 2-fold symmetrical on binding to RuvC with unstacked arms; it has a different conformation from HJ DNA in complex with RuvA. In the full resolvosome a probable DNA-RuvA(4)-RuvB(12)-RuvC(2) complex forms which resolves the HJ. Mg(2+) is required as a cofactor.

It localises to the cytoplasm. It catalyses the reaction Endonucleolytic cleavage at a junction such as a reciprocal single-stranded crossover between two homologous DNA duplexes (Holliday junction).. Its function is as follows. The RuvA-RuvB-RuvC complex processes Holliday junction (HJ) DNA during genetic recombination and DNA repair. Endonuclease that resolves HJ intermediates. Cleaves cruciform DNA by making single-stranded nicks across the HJ at symmetrical positions within the homologous arms, yielding a 5'-phosphate and a 3'-hydroxyl group; requires a central core of homology in the junction. The consensus cleavage sequence is 5'-(A/T)TT(C/G)-3'. Cleavage occurs on the 3'-side of the TT dinucleotide at the point of strand exchange. HJ branch migration catalyzed by RuvA-RuvB allows RuvC to scan DNA until it finds its consensus sequence, where it cleaves and resolves the cruciform DNA. The chain is Crossover junction endodeoxyribonuclease RuvC from Klebsiella pneumoniae (strain 342).